Consider the following 381-residue polypeptide: Queuine tRNA-ribosyltransferase (381 aa).

Catalysis depends on aspartate 92, which acts as the Proton acceptor. Residues 92-96, aspartate 146, glutamine 190, and glycine 217 each bind substrate; that span reads DSGGF. Residues 248 to 254 are RNA binding; the sequence is GVGRPED. Aspartate 267 functions as the Nucleophile in the catalytic mechanism. The RNA binding; important for wobble base 34 recognition stretch occupies residues 272-276; the sequence is TRNAR. Zn(2+)-binding residues include cysteine 305, cysteine 307, cysteine 310, and histidine 337.

Belongs to the queuine tRNA-ribosyltransferase family. As to quaternary structure, homodimer. Within each dimer, one monomer is responsible for RNA recognition and catalysis, while the other monomer binds to the replacement base PreQ1. Zn(2+) is required as a cofactor.

It carries out the reaction 7-aminomethyl-7-carbaguanine + guanosine(34) in tRNA = 7-aminomethyl-7-carbaguanosine(34) in tRNA + guanine. Its pathway is tRNA modification; tRNA-queuosine biosynthesis. Its function is as follows. Catalyzes the base-exchange of a guanine (G) residue with the queuine precursor 7-aminomethyl-7-deazaguanine (PreQ1) at position 34 (anticodon wobble position) in tRNAs with GU(N) anticodons (tRNA-Asp, -Asn, -His and -Tyr). Catalysis occurs through a double-displacement mechanism. The nucleophile active site attacks the C1' of nucleotide 34 to detach the guanine base from the RNA, forming a covalent enzyme-RNA intermediate. The proton acceptor active site deprotonates the incoming PreQ1, allowing a nucleophilic attack on the C1' of the ribose to form the product. After dissociation, two additional enzymatic reactions on the tRNA convert PreQ1 to queuine (Q), resulting in the hypermodified nucleoside queuosine (7-(((4,5-cis-dihydroxy-2-cyclopenten-1-yl)amino)methyl)-7-deazaguanosine). The polypeptide is Queuine tRNA-ribosyltransferase (Xanthomonas campestris pv. campestris (strain B100)).